The sequence spans 479 residues: Cysteine protease effector 1 (479 aa).

The sequence is that of Cysteine protease effector 1 from Escherichia coli O1:K1:H7 (strain ATCC 11775 / DSM 30083 / JCM 1649 / NBRC 102203 / NCTC 9001 / U5/41).